Reading from the N-terminus, the 664-residue chain is Phosphomethylpyrimidine synthase (664 aa).

Residues Asn235, Met264, Tyr293, His329, 349 to 351, 390 to 393, and Glu429 contribute to the substrate site; these read SRG and DGMR. His433 contacts Zn(2+). Residue Tyr456 participates in substrate binding. His497 serves as a coordination point for Zn(2+). Residues Cys577, Cys580, and Cys585 each coordinate [4Fe-4S] cluster.

This sequence belongs to the ThiC family. Homodimer. It depends on [4Fe-4S] cluster as a cofactor.

It catalyses the reaction 5-amino-1-(5-phospho-beta-D-ribosyl)imidazole + S-adenosyl-L-methionine = 4-amino-2-methyl-5-(phosphooxymethyl)pyrimidine + CO + 5'-deoxyadenosine + formate + L-methionine + 3 H(+). The protein operates within cofactor biosynthesis; thiamine diphosphate biosynthesis. In terms of biological role, catalyzes the synthesis of the hydroxymethylpyrimidine phosphate (HMP-P) moiety of thiamine from aminoimidazole ribotide (AIR) in a radical S-adenosyl-L-methionine (SAM)-dependent reaction. This is Phosphomethylpyrimidine synthase from Shewanella amazonensis (strain ATCC BAA-1098 / SB2B).